The following is a 572-amino-acid chain: Cleavage stimulation factor subunit 2 (572 aa).

Ser14 carries the phosphoserine modification. Positions 16–94 (RSVFVGNIPY…RALRVDNAAS (79 aa)) constitute an RRM domain. The segment at 108–248 (APVIESPYGE…VNGAPPLMQA (141 aa)) is interactions with CSTF3 and SYMPK. Lys189 participates in a covalent cross-link: Glycyl lysine isopeptide (Lys-Gly) (interchain with G-Cter in SUMO2). Residues 208 to 230 (VHSAGPGSGSSVSMNQQNPQTPQ) form a disordered region. The residue at position 308 (Arg308) is an Omega-N-methylarginine. The segment at 322 to 382 (LGDAPNDPRG…RGGPLTEPRP (61 aa)) is disordered. Residues 360-373 (PGHDSRGPPPHEMR) show a composition bias toward basic and acidic residues. The stretch at 410–414 (IDARA) is one 1; approximate repeat. The interval 410–464 (IDARAMEARGLDARGLEARAMEARAMEARAMEARAMEARAMEVRGMEARSMDTRG) is 11 X 5 AA tandem repeats of M-E-A-R-[AG]. Repeat 2 spans residues 415–419 (MEARG). Residues 420–424 (LDARG) form a 3; approximate repeat. The stretch at 425-429 (LEARA) is one 4; approximate repeat. 4 tandem repeats follow at residues 430-434 (MEARA), 435-439 (MEARA), 440-444 (MEARA), and 445-449 (MEARA). A 9; approximate repeat occupies 450–454 (MEVRG). Repeat unit 10 spans residues 455 to 459 (MEARS). The stretch at 460–464 (MDTRG) is one 11; approximate repeat. Arg463 and Arg470 each carry omega-N-methylarginine. The interval 509 to 572 (IQGGGQPGGF…EQIQKSTGAP (64 aa)) is interaction with RPO2TC1. Position 519 is a phosphoserine (Ser519).

In terms of assembly, the CSTF complex is composed of CSTF1 (50 kDa subunit), CSTF2 (64 kDa subunit) and CSTF3 (77 kDa subunit). CSTF2 directly interacts with CSTF3, SYMPK and RPO2TC1. Interacts with HSF1 in heat-stressed cells. Interacts with CPSF2, CPSF3 and FIP1L1. Interacts with DDX1.

Its subcellular location is the nucleus. Functionally, one of the multiple factors required for polyadenylation and 3'-end cleavage of mammalian pre-mRNAs. This subunit is directly involved in the binding to pre-mRNAs. The sequence is that of Cleavage stimulation factor subunit 2 (CSTF2) from Bos taurus (Bovine).